We begin with the raw amino-acid sequence, 233 residues long: Fibrillarin-like rRNA/tRNA 2'-O-methyltransferase (233 aa).

Residues 89-90 (TT), 108-109 (EF), 133-134 (DA), and 153-156 (DIAQ) contribute to the S-adenosyl-L-methionine site.

It belongs to the methyltransferase superfamily. Fibrillarin family. Interacts with nop5. Component of box C/D small ribonucleoprotein (sRNP) particles that contain rpl7ae, FlpA and nop5, plus a guide RNA.

Involved in pre-rRNA and tRNA processing. Utilizes the methyl donor S-adenosyl-L-methionine to catalyze the site-specific 2'-hydroxyl methylation of ribose moieties in rRNA and tRNA. Site specificity is provided by a guide RNA that base pairs with the substrate. Methylation occurs at a characteristic distance from the sequence involved in base pairing with the guide RNA. The protein is Fibrillarin-like rRNA/tRNA 2'-O-methyltransferase of Sulfurisphaera tokodaii (strain DSM 16993 / JCM 10545 / NBRC 100140 / 7) (Sulfolobus tokodaii).